The chain runs to 275 residues: NAD kinase (275 aa).

Aspartate 53 serves as the catalytic Proton acceptor. NAD(+) contacts are provided by residues 53-54, 129-130, arginine 155, aspartate 157, and 168-173; these read DG, NE, and TAYNKS.

It belongs to the NAD kinase family. The cofactor is a divalent metal cation.

It is found in the cytoplasm. The catalysed reaction is NAD(+) + ATP = ADP + NADP(+) + H(+). In terms of biological role, involved in the regulation of the intracellular balance of NAD and NADP, and is a key enzyme in the biosynthesis of NADP. Catalyzes specifically the phosphorylation on 2'-hydroxyl of the adenosine moiety of NAD to yield NADP. The protein is NAD kinase of Streptococcus agalactiae serotype Ia (strain ATCC 27591 / A909 / CDC SS700).